Reading from the N-terminus, the 408-residue chain is NFATC2-interacting protein (408 aa).

The tract at residues 1 to 113 (MAEPVGKRGR…LDPGEAPLVP (113 aa)) is disordered. Over residues 24–40 (QRSPSRGTLDVVSVDLV) the composition is skewed to low complexity. A phosphoserine mark is found at S41, S43, S73, S77, S79, S81, and S116. Residues K118 and K120 each participate in a glycyl lysine isopeptide (Lys-Gly) (interchain with G-Cter in SUMO2) cross-link. The disordered stretch occupies residues 141 to 205 (EEEVELADSS…TKSRKHTRAL (65 aa)). Residues 169-181 (RTKDKEEKKKTEI) are compositionally biased toward basic and acidic residues. Phosphoserine is present on residues S187, S190, and S193. Residues 196 to 205 (TKSRKHTRAL) are compositionally biased toward basic residues. Residues 197–220 (KSRKHTRALKKLSEVNKRLQDLRS) adopt a coiled-coil conformation. A phosphoserine mark is found at S209 and S303. Residues T305 and T307 each carry the phosphothreonine modification. The 72-residue stretch at 337–408 (LQLRVQGKEK…ESGDLIEVWG (72 aa)) folds into the Ubiquitin-like domain. Phosphoserine is present on residues S358 and S379.

Interacts with NFATC2, TRAF1, TRAF2 and PRMT1. Interacts with UBE2I/UBC9. In terms of processing, methylation at the N-terminus by PRMT1 modulates interaction with the NFAT complex and results in augmented cytokine production.

The protein localises to the nucleus. It is found in the cytoplasm. In terms of biological role, in T-helper 2 (Th2) cells, regulates the magnitude of NFAT-driven transcription of a specific subset of cytokine genes, including IL3, IL4, IL5 and IL13, but not IL2. Recruits PRMT1 to the IL4 promoter; this leads to enhancement of histone H4 'Arg-3'-methylation and facilitates subsequent histone acetylation at the IL4 locus, thus promotes robust cytokine expression. Down-regulates formation of poly-SUMO chains by UBE2I/UBC9. The chain is NFATC2-interacting protein (NFATC2IP) from Macaca fascicularis (Crab-eating macaque).